The sequence spans 359 residues: Peptide chain release factor 1 (359 aa).

Glutamine 236 carries the N5-methylglutamine modification. Residues 288 to 307 (QDEQDAERKSTIGTGDRSER) form a disordered region. Over residues 293-307 (AERKSTIGTGDRSER) the composition is skewed to basic and acidic residues.

This sequence belongs to the prokaryotic/mitochondrial release factor family. Post-translationally, methylated by PrmC. Methylation increases the termination efficiency of RF1.

The protein localises to the cytoplasm. In terms of biological role, peptide chain release factor 1 directs the termination of translation in response to the peptide chain termination codons UAG and UAA. The sequence is that of Peptide chain release factor 1 (prfA) from Streptococcus gordonii (strain Challis / ATCC 35105 / BCRC 15272 / CH1 / DL1 / V288).